Reading from the N-terminus, the 156-residue chain is MIP18 family protein galla-2 (156 aa).

The protein belongs to the MIP18 family. As to quaternary structure, component of the CGX complex composed of crb, galla (galla-1 or galla-2) and Xpd. Interacts with crb (via intracellular domain). Also able to interact with Xpd in the absence of crb. Interacts with Mms19.

Functionally, component of the crb-galla-Xpd (CGX) complex which is essential for proper mitotic chromosome segregation in early embryos. The CGX complex is also required for cell proliferation in developing wing disks. In the CGX complex, acts with crb to recruit Xpd thus forming the functional complex. In Drosophila melanogaster (Fruit fly), this protein is MIP18 family protein galla-2.